The chain runs to 606 residues: Gastrula zinc finger protein XlCGF66.1 (606 aa).

Disordered regions lie at residues 1 to 31 (MGMWEEASDTGMKGKKKKKDKNEEEEERGKK) and 240 to 271 (TLHSKDSCNEGHKHLSHKSDYNKHQNPHKRQK). A compositionally biased stretch (basic and acidic residues) spans 242 to 262 (HSKDSCNEGHKHLSHKSDYNK). 11 C2H2-type zinc fingers span residues 273-295 (FSCSKCGKCFSNLTSLHCHQKTH), 300-322 (LLCLKCGKCFATSSKLIIHRQTH), 328-350 (FSCSECRICFSKQSSLARHQITH), 384-407 (DFCSECGKCFATSSQLIAHQQQVH), 413-435 (FSCTKCGKCFSYRSRLVRHQRTH), 441-464 (YSCSECGKCFASSSHLIGHRQQVH), 470-492 (FFCSECGKYFLYQSQLVRHQRTH), 498-521 (YSCSECGKCFATSSQLMAHQQQVH), 527-549 (FSCSECGKYFLYRAHLVRHQRTH), 555-578 (DFCFECGKCFATSLQLIAHQQQVH), and 584-606 (FSCSECGKSFLYRSHLARHHRTH).

Belongs to the krueppel C2H2-type zinc-finger protein family.

It is found in the nucleus. Its function is as follows. May be involved in transcriptional regulation. The sequence is that of Gastrula zinc finger protein XlCGF66.1 from Xenopus laevis (African clawed frog).